The chain runs to 425 residues: Probable sucrose-phosphatase 3a (425 aa).

It belongs to the sucrose phosphatase family. Homodimer. It depends on Mg(2+) as a cofactor.

The enzyme catalyses sucrose 6(F)-phosphate + H2O = sucrose + phosphate. It participates in glycan biosynthesis; sucrose biosynthesis; sucrose from D-fructose 6-phosphate and UDP-alpha-D-glucose: step 2/2. Functionally, catalyzes the final step of sucrose synthesis. The sequence is that of Probable sucrose-phosphatase 3a (SPP3A) from Arabidopsis thaliana (Mouse-ear cress).